The primary structure comprises 383 residues: Dual-specificity RNA methyltransferase RlmN (383 aa).

Glutamate 95 serves as the catalytic Proton acceptor. The Radical SAM core domain maps to 101–349; it reads EETRGTLCVS…TTVRKTRGDD (249 aa). An intrachain disulfide couples cysteine 108 to cysteine 354. Residues cysteine 115, cysteine 119, and cysteine 122 each contribute to the [4Fe-4S] cluster site. Residues 180 to 181, serine 212, 234 to 236, and asparagine 311 each bind S-adenosyl-L-methionine; these read GE and SLH. Cysteine 354 acts as the S-methylcysteine intermediate in catalysis.

The protein belongs to the radical SAM superfamily. RlmN family. [4Fe-4S] cluster serves as cofactor.

Its subcellular location is the cytoplasm. It catalyses the reaction adenosine(2503) in 23S rRNA + 2 reduced [2Fe-2S]-[ferredoxin] + 2 S-adenosyl-L-methionine = 2-methyladenosine(2503) in 23S rRNA + 5'-deoxyadenosine + L-methionine + 2 oxidized [2Fe-2S]-[ferredoxin] + S-adenosyl-L-homocysteine. The catalysed reaction is adenosine(37) in tRNA + 2 reduced [2Fe-2S]-[ferredoxin] + 2 S-adenosyl-L-methionine = 2-methyladenosine(37) in tRNA + 5'-deoxyadenosine + L-methionine + 2 oxidized [2Fe-2S]-[ferredoxin] + S-adenosyl-L-homocysteine. Functionally, specifically methylates position 2 of adenine 2503 in 23S rRNA and position 2 of adenine 37 in tRNAs. m2A2503 modification seems to play a crucial role in the proofreading step occurring at the peptidyl transferase center and thus would serve to optimize ribosomal fidelity. The polypeptide is Dual-specificity RNA methyltransferase RlmN (Paraburkholderia xenovorans (strain LB400)).